A 126-amino-acid polypeptide reads, in one-letter code: Large ribosomal subunit protein bL19 (126 aa).

It belongs to the bacterial ribosomal protein bL19 family.

In terms of biological role, this protein is located at the 30S-50S ribosomal subunit interface and may play a role in the structure and function of the aminoacyl-tRNA binding site. This chain is Large ribosomal subunit protein bL19, found in Albidiferax ferrireducens (strain ATCC BAA-621 / DSM 15236 / T118) (Rhodoferax ferrireducens).